The chain runs to 136 residues: LDYVYGPGRRAMNSPAVPALTKVLLEDVKKALTNTLSPGDRLLLVDMDEWGVDVALTGSQKALSFPTGMGLVCASPRVFFDWKDYLRTYWHYDQALDLELAVEAWGLSNRYNLSLGLGLNKVAGGKVFRDVGYPVK.

It belongs to the class-V pyridoxal-phosphate-dependent aminotransferase family. As to quaternary structure, homodimer. The cofactor is pyridoxal 5'-phosphate. As to expression, expressed in leaves but not in root tissue or seedlings.

The protein resides in the peroxisome. It carries out the reaction glyoxylate + L-serine = 3-hydroxypyruvate + glycine. The catalysed reaction is glyoxylate + L-alanine = glycine + pyruvate. Its activity is regulated as follows. Inhibited by aminooxyacetate. The polypeptide is Serine--glyoxylate aminotransferase (Zea mays (Maize)).